A 643-amino-acid polypeptide reads, in one-letter code: MPIITLPDGSQRQFDRPVSVLEVAQDIGAGLAKATIAGRVNGERRDACYVIEQDATLEIITAKDEDGLEIIRHSCAHLLGHAIKQLFPDVKMAIGPTIENGFYYDVDLDRSLTQEDIDAIEKRMLELAKTNYDVVKKRVTWQEARDTFEKRGEPYKMAILDENIERTATPALYHHLEYIDMCRGPHVPNMRFCQHFKLQKVAGAYWRGDSKNKMLQRIYGTAWADKKQLAEYLTRLEEAAKRDHRKIGKALDLYHMQEEAPGMVFWHNDGWTIFRELETFVRTKLKQYDYQEVKGPFMMDRVLWEKTGHWQNYADLMFTTQSENREYAIKPMNCPGHVQIFNQGLKSYRDLPIRMAEFGSCHRNEPSGSLHGLMRVRGFTQDDAHIFCTEDQIESEVTSCIKMVYDIYSTFGFTNIAVKLSTRPENRIGSDEMWDRAEAGLAAALAHNGLEYEIQEGEGAFYGPKIEFALRDCLGREWQCGTVQLDFALPGRLDATYVAEDNSRKTPVMIHRAILGSIERFIGIITEEYAGFFPAWLAPTQAVVMNITDSQADYVQKVAKQLSDVGLRVKTDLRNEKVGFKIREHTLRRVPYMLVCGDKEIAEGKVAVRTRKGADLGTFTVEEFAEILKNQVRSRELKLLNEE.

In terms of domain architecture, TGS spans Met1–Thr61. The segment at Asp243–Pro534 is catalytic. Residues Cys334, His385, and His511 each coordinate Zn(2+).

Belongs to the class-II aminoacyl-tRNA synthetase family. As to quaternary structure, homodimer. The cofactor is Zn(2+).

It localises to the cytoplasm. The catalysed reaction is tRNA(Thr) + L-threonine + ATP = L-threonyl-tRNA(Thr) + AMP + diphosphate + H(+). Its function is as follows. Catalyzes the attachment of threonine to tRNA(Thr) in a two-step reaction: L-threonine is first activated by ATP to form Thr-AMP and then transferred to the acceptor end of tRNA(Thr). Also edits incorrectly charged L-seryl-tRNA(Thr). This is Threonine--tRNA ligase from Haemophilus influenzae (strain ATCC 51907 / DSM 11121 / KW20 / Rd).